The chain runs to 547 residues: Chaperonin GroEL 2 (547 aa).

ATP contacts are provided by residues 29-32, 86-90, glycine 418, 482-484, and aspartate 498; these read TLGP, DGTTT, and NAA.

Belongs to the chaperonin (HSP60) family. In terms of assembly, forms a cylinder of 14 subunits composed of two heptameric rings stacked back-to-back. Interacts with the co-chaperonin GroES.

It is found in the cytoplasm. It carries out the reaction ATP + H2O + a folded polypeptide = ADP + phosphate + an unfolded polypeptide.. Functionally, together with its co-chaperonin GroES, plays an essential role in assisting protein folding. The GroEL-GroES system forms a nano-cage that allows encapsulation of the non-native substrate proteins and provides a physical environment optimized to promote and accelerate protein folding. This chain is Chaperonin GroEL 2, found in Corynebacterium efficiens (strain DSM 44549 / YS-314 / AJ 12310 / JCM 11189 / NBRC 100395).